We begin with the raw amino-acid sequence, 316 residues long: Lys-63-specific deubiquitinase BRCC36 (316 aa).

Position 2 is an N-acetylalanine (Ala2). The region spanning Val12 to Gln179 is the MPN domain. Positions 122, 124, and 135 each coordinate Zn(2+). The short motif at His122–Asp135 is the JAMM motif element. At Ser258 the chain carries Phosphoserine.

This sequence belongs to the peptidase M67A family. BRCC36 subfamily. Component of the ARISC complex, at least composed of UIMC1/RAP80, ABRAXAS1, BRCC3/BRCC36, BABAM2 and BABAM1/NBA1. Component of the BRCA1-A complex, at least composed of BRCA1, BARD1, UIMC1/RAP80, ABRAXAS1, BRCC3/BRCC36, BABAM2 and BABAM1/NBA1. In the BRCA1-A complex, interacts directly with ABRAXAS1 and BABAM2. Component of the BRISC complex, at least composed of ABRAXAS2, BRCC3/BRCC36, BABAM2 and BABAM1/NBA1. Identified in a complex with SHMT2 and the other subunits of the BRISC complex. In the BRISC complex, interacts directly with ABRAXAS2. Identified in a complex with ABRAXAS2 and NUMA1. The BRISC complex interacts with the CSN complex. Component of the BRCA1/BRCA2 containing complex (BRCC), which also contains BRCA1, BRCA2, BARD1, BABAM2 and RAD51. BRCC is a ubiquitin E3 ligase complex that enhances cellular survival following DNA damage. Interacts with BRCA1. Binds polyubiquitin. Interacts with PWWP2B. Interacts with HDAC1; this interaction is enhanced in the presence of PWWP2B. Requires Zn(2+) as cofactor.

It localises to the nucleus. The protein resides in the cytoplasm. It is found in the cytoskeleton. Its subcellular location is the spindle pole. Functionally, metalloprotease that specifically cleaves 'Lys-63'-linked polyubiquitin chains. Does not have activity toward 'Lys-48'-linked polyubiquitin chains. Component of the BRCA1-A complex, a complex that specifically recognizes 'Lys-63'-linked ubiquitinated histones H2A and H2AX at DNA lesions sites, leading to target the BRCA1-BARD1 heterodimer to sites of DNA damage at double-strand breaks (DSBs). In the BRCA1-A complex, it specifically removes 'Lys-63'-linked ubiquitin on histones H2A and H2AX, antagonizing the RNF8-dependent ubiquitination at double-strand breaks (DSBs). Catalytic subunit of the BRISC complex, a multiprotein complex that specifically cleaves 'Lys-63'-linked ubiquitin in various substrates. Mediates the specific 'Lys-63'-specific deubiquitination associated with the COP9 signalosome complex (CSN), via the interaction of the BRISC complex with the CSN complex. The BRISC complex is required for normal mitotic spindle assembly and microtubule attachment to kinetochores via its role in deubiquitinating NUMA1. Plays a role in interferon signaling via its role in the deubiquitination of the interferon receptor IFNAR1; deubiquitination increases IFNAR1 activity by enhancing its stability and cell surface expression. Acts as a regulator of the NLRP3 inflammasome by mediating deubiquitination of NLRP3, leading to NLRP3 inflammasome assembly. Down-regulates the response to bacterial lipopolysaccharide (LPS) via its role in IFNAR1 deubiquitination. Deubiquitinates HDAC1 and PWWP2B leading to their stabilization. This chain is Lys-63-specific deubiquitinase BRCC36 (BRCC3), found in Callithrix jacchus (White-tufted-ear marmoset).